A 343-amino-acid polypeptide reads, in one-letter code: Fructose-1,6-bisphosphatase, cytosolic (343 aa).

Mg(2+) contacts are provided by glutamate 71, glutamate 100, aspartate 121, leucine 123, and aspartate 124. Substrate contacts are provided by residues 124 to 127 (DGSS), asparagine 215, tyrosine 247, tyrosine 267, and lysine 277. Glutamate 283 provides a ligand contact to Mg(2+).

This sequence belongs to the FBPase class 1 family. The cofactor is Mg(2+).

The protein localises to the cytoplasm. The catalysed reaction is beta-D-fructose 1,6-bisphosphate + H2O = beta-D-fructose 6-phosphate + phosphate. The sequence is that of Fructose-1,6-bisphosphatase, cytosolic (CFBP) from Saccharum hybrid (Sugarcane).